The primary structure comprises 478 residues: Calcium/calmodulin-dependent protein kinase type II subunit alpha (478 aa).

Tyrosine 13 is modified (phosphotyrosine). Residues 13–271 (YQLFEELGKG…AAEALKHPWI (259 aa)) enclose the Protein kinase domain. Residues 19 to 27 (LGKGAFSVV) and lysine 42 contribute to the ATP site. Aspartate 135 functions as the Proton acceptor in the catalytic mechanism. Serine 257 carries the post-translational modification Phosphoserine. Threonine 286 carries the phosphothreonine; by autocatalysis modification. The interval 290–300 (LKKFNARRKLK) is calmodulin-binding. The tract at residues 310–320 (TRNFSGGKSGG) is interaction with BAALC. Positions 314 to 341 (SGGKSGGNKKNDGVKESSESTNTTIEDE) are disordered. Basic and acidic residues predominate over residues 322–331 (KKNDGVKESS). Phosphoserine is present on residues serine 330, serine 331, and serine 333. Phosphothreonine is present on residues threonine 336 and threonine 337. Serine 404 is modified (phosphoserine).

Belongs to the protein kinase superfamily. CAMK Ser/Thr protein kinase family. CaMK subfamily. There are 4 genes encoding calcium/calmodulin-dependent protein kinase type II chains: CAMK2A, CAMK2B, CAMK2G and CAMK2D. The corresponding proteins assemble into homo- or heteromultimeric holoenzymes composed of 12 subunits with two hexameric rings stacked one on top of the other. Interacts with BAALC. Interacts with MPDZ. Interacts with SYN1. Interacts with CAMK2N2. Interacts with SYNGAP1. Interacts with SYNPO2. Interacts with SHANK3. Interacts with GRIN2B. Interacts with CACNB2. Interacts with LRRC7. Interacts with GRM5. Interacts with DAGLA (via C-terminal); this interaction is enhanced by autophosphorylation of CAMK2A at Thr-286. Interacts with CAMK2N1; this interaction requires CAMK2A activation by Ca(2+). Requires Mg(2+) as cofactor. Post-translationally, autophosphorylation of Thr-286 following activation by Ca(2+)/calmodulin. Phosphorylation of Thr-286 locks the kinase into an activated state. Palmitoylated. Probably palmitoylated by ZDHHC3 and ZDHHC7. In terms of tissue distribution, expressed in brain. As to expression, expressed in skeletal muscle.

The protein localises to the cytoplasm. It is found in the synapse. It localises to the postsynaptic density. The protein resides in the cell projection. Its subcellular location is the dendritic spine. The protein localises to the dendrite. The catalysed reaction is L-seryl-[protein] + ATP = O-phospho-L-seryl-[protein] + ADP + H(+). It catalyses the reaction L-threonyl-[protein] + ATP = O-phospho-L-threonyl-[protein] + ADP + H(+). With respect to regulation, activated by Ca(2+)/calmodulin. Binding of calmodulin results in conformational change that relieves intrasteric autoinhibition and allows autophosphorylation of Thr-286 which turns the kinase in a constitutively active form and confers to the kinase a Ca(2+)-independent activity. Functionally, calcium/calmodulin-dependent protein kinase that functions autonomously after Ca(2+)/calmodulin-binding and autophosphorylation, and is involved in various processes, such as synaptic plasticity, neurotransmitter release and long-term potentiation. Member of the NMDAR signaling complex in excitatory synapses, it regulates NMDAR-dependent potentiation of the AMPAR and therefore excitatory synaptic transmission. Regulates dendritic spine development. Also regulates the migration of developing neurons. Phosphorylates the transcription factor FOXO3 to activate its transcriptional activity. Phosphorylates the transcription factor ETS1 in response to calcium signaling, thereby decreasing ETS1 affinity for DNA. In response to interferon-gamma (IFN-gamma) stimulation, catalyzes phosphorylation of STAT1, stimulating the JAK-STAT signaling pathway. In response to interferon-beta (IFN-beta) stimulation, stimulates the JAK-STAT signaling pathway. Acts as a negative regulator of 2-arachidonoylglycerol (2-AG)-mediated synaptic signaling via modulation of DAGLA activity. Its function is as follows. Has no kinase activity. The sequence is that of Calcium/calmodulin-dependent protein kinase type II subunit alpha (Camk2a) from Mus musculus (Mouse).